A 386-amino-acid chain; its full sequence is TRIBOA-glucoside O-methyltransferase BX7 (386 aa).

S-adenosyl-L-methionine-binding residues include Gly224, Asp248, Met270, and Lys283. Residue His287 is the Proton acceptor of the active site.

The protein belongs to the class I-like SAM-binding methyltransferase superfamily. Cation-independent O-methyltransferase family. COMT subfamily. Expressed in seedlings and newly formed crown roots. Highest expression in the scutellar node. Low to non detectable levels in cob, tassel and mature organs like husk or leaves.

It carries out the reaction TRIBOA beta-D-glucoside + S-adenosyl-L-methionine = DIMBOA beta-D-glucoside + S-adenosyl-L-homocysteine + H(+). Functionally, O-methyltransferase involved in the benzoxazinoid glucoside biosynthesis. Can use 2,4,7-trihydroxy-2H-1,4-benzoxazin-3(4H)-one 2-D-glucoside (TRIBOA-glucoside) as substrate, but not aglucone TRIBOA, caffeic acid, ferulic acid, apigenin or quercetin. The protein is TRIBOA-glucoside O-methyltransferase BX7 (BX7) of Zea mays (Maize).